We begin with the raw amino-acid sequence, 175 residues long: Austinoid biosynthesis cluster protein F (175 aa).

The protein belongs to the trt14 isomerase family. In terms of assembly, homodimer.

It functions in the pathway secondary metabolite biosynthesis; terpenoid biosynthesis. Functionally, part of the gene cluster that mediates the biosynthesis of calidodehydroaustin, a fungal meroterpenoid. The first step of the pathway is the synthesis of 3,5-dimethylorsellinic acid by the polyketide synthase ausA. 3,5-dimethylorsellinic acid is then prenylated by the polyprenyl transferase ausN. Further epoxidation by the FAD-dependent monooxygenase ausM and cyclization by the probable terpene cyclase ausL lead to the formation of protoaustinoid A. Protoaustinoid A is then oxidized to spiro-lactone preaustinoid A3 by the combined action of the FAD-binding monooxygenases ausB and ausC, and the dioxygenase ausE. Acid-catalyzed keto-rearrangement and ring contraction of the tetraketide portion of preaustinoid A3 by ausJ lead to the formation of preaustinoid A4. The aldo-keto reductase ausK, with the help of ausH, is involved in the next step by transforming preaustinoid A4 into isoaustinone which is in turn hydroxylated by the P450 monooxygenase ausI to form austinolide. The cytochrome P450 monooxygenase ausG modifies austinolide to austinol. Austinol is further acetylated to austin by the O-acetyltransferase ausP, which spontaneously changes to dehydroaustin. The cytochrome P450 monooxygenase ausR then converts dehydroaustin is into 7-dehydrodehydroaustin. The hydroxylation catalyzed by ausR permits the O-acetyltransferase ausQ to add an additional acetyl group to the molecule, leading to the formation of acetoxydehydroaustin. The short chain dehydrogenase ausT catalyzes the reduction of the double bond present between carbon atoms 1 and 2 to convert 7-dehydrodehydroaustin into 1,2-dihydro-7-hydroxydehydroaustin. AusQ catalyzes not only an acetylation reaction but also the addition of the PKS ausV diketide product to 1,2-dihydro-7-hydroxydehydroaustin, forming precalidodehydroaustin. Finally, the iron/alpha-ketoglutarate-dependent dioxygenase converts precalidodehydroaustin into calidodehydroaustin. This chain is Austinoid biosynthesis cluster protein F, found in Aspergillus calidoustus.